The following is a 202-amino-acid chain: Holliday junction branch migration complex subunit RuvA (202 aa).

The segment at 1–65 (MIAYVEGRVA…EDALELFGFS (65 aa)) is domain I. Residues 66-144 (TWDERQTFMV…VEDLPAGLVL (79 aa)) are domain II. The tract at residues 145-155 (AGGAAPGGVFR) is flexible linker. Positions 155–202 (RDALAGLGNLGYLEDEAAPVLKEVLKAEPDLDVAGALRAALKALARGR) are domain III.

It belongs to the RuvA family. As to quaternary structure, homotetramer. Forms an RuvA(8)-RuvB(12)-Holliday junction (HJ) complex. HJ DNA is sandwiched between 2 RuvA tetramers; dsDNA enters through RuvA and exits via RuvB. An RuvB hexamer assembles on each DNA strand where it exits the tetramer. Each RuvB hexamer is contacted by two RuvA subunits (via domain III) on 2 adjacent RuvB subunits; this complex drives branch migration. In the full resolvosome a probable DNA-RuvA(4)-RuvB(12)-RuvC(2) complex forms which resolves the HJ.

It localises to the cytoplasm. The RuvA-RuvB-RuvC complex processes Holliday junction (HJ) DNA during genetic recombination and DNA repair, while the RuvA-RuvB complex plays an important role in the rescue of blocked DNA replication forks via replication fork reversal (RFR). RuvA specifically binds to HJ cruciform DNA, conferring on it an open structure. The RuvB hexamer acts as an ATP-dependent pump, pulling dsDNA into and through the RuvAB complex. HJ branch migration allows RuvC to scan DNA until it finds its consensus sequence, where it cleaves and resolves the cruciform DNA. The protein is Holliday junction branch migration complex subunit RuvA of Nitratidesulfovibrio vulgaris (strain DSM 19637 / Miyazaki F) (Desulfovibrio vulgaris).